Here is a 197-residue protein sequence, read N- to C-terminus: Potassium-transporting ATPase KdpC subunit (197 aa).

A helical transmembrane segment spans residues 7 to 27; that stretch reads PALVSMGLFTVLLGLAYPLAV.

It belongs to the KdpC family. In terms of assembly, the system is composed of three essential subunits: KdpA, KdpB and KdpC.

Its subcellular location is the cell inner membrane. Part of the high-affinity ATP-driven potassium transport (or Kdp) system, which catalyzes the hydrolysis of ATP coupled with the electrogenic transport of potassium into the cytoplasm. This subunit acts as a catalytic chaperone that increases the ATP-binding affinity of the ATP-hydrolyzing subunit KdpB by the formation of a transient KdpB/KdpC/ATP ternary complex. The polypeptide is Potassium-transporting ATPase KdpC subunit (Caulobacter vibrioides (strain ATCC 19089 / CIP 103742 / CB 15) (Caulobacter crescentus)).